Consider the following 784-residue polypeptide: Alpha-catulin (784 aa).

The vinculin/alpha-catenin homology 1 (VH1) region stretch occupies residues 35 to 247; the sequence is IKTKSIEQTL…LLLTASKTYL (213 aa). Residues 387–414 adopt a coiled-coil conformation; it reads ASGLEVTVERLNRRLKDLSKQLQIVAME. Residues 552 to 696 form a vinculin/alpha-catenin homology 2 (VH2) region region; sequence PRPGKHGTTQ…MVKSPTVGKT (145 aa). The interval 737–784 is disordered; it reads GSVNGRTGADGERTSRESTVWRRTPSIRRAAPPTSSHLSANNSSSIHI. Over residues 745–756 the composition is skewed to basic and acidic residues; the sequence is ADGERTSRESTV. The span at 771–784 shows a compositional bias: low complexity; sequence SSHLSANNSSSIHI.

The protein belongs to the vinculin/alpha-catenin family. Interacts with slo-1 (via C-terminus); the interaction is required for localization of slo-1 to dense bodies in body wall muscle cells. Interacts (via N-terminus) with dystrophin complex member dyb-1 (via C-terminus); the interaction is required for localization of the dystrophin complex and ctn-1 near dense bodies in muscle cells. In terms of tissue distribution, expressed in body wall muscles, vulval muscles, stomatointestinal cells and pharyngeal muscle cells. Expressed in enteric muscles, nerve ring neurons and in the ventral nerve cord.

The protein localises to the cytoplasm. Functionally, required for slo-1 potassium ion channel clustering at presynaptic terminals and in egg-laying muscles; clustering of slo-1 mediates the intoxicating and sedatory effects of ethanol on worms. Required for slo-1 localization to dense bodies in body wall muscle cells. Maintains the localization of the dystrophin complex near muscle cell dense bodies via its interaction with complex member dyb-1 which is required for slo-1 localization in muscle while slo-1 localization in neurons is independent of the dystrophin complex. In Caenorhabditis elegans, this protein is Alpha-catulin.